A 42-amino-acid polypeptide reads, in one-letter code: uncharacterized protein (42 aa).

The helical transmembrane segment at 15 to 37 (PLILAVDCAIIIPNTNFIHSFLI) threads the bilayer.

The protein localises to the membrane. This is an uncharacterized protein from Dictyostelium discoideum (Social amoeba).